The sequence spans 65 residues: Large ribosomal subunit protein bL35 (65 aa).

The interval 1–26 (MPKMKTHRGAAKRFRKTGTGKLKRGK) is disordered.

Belongs to the bacterial ribosomal protein bL35 family.

The sequence is that of Large ribosomal subunit protein bL35 from Clostridium beijerinckii (strain ATCC 51743 / NCIMB 8052) (Clostridium acetobutylicum).